The following is a 2265-amino-acid chain: Collagen alpha-6(VI) chain (2265 aa).

The signal sequence occupies residues 1-18 (MLLVLCLTMICFHVCVNQ). The interval 19–1390 (DSGPEYADVV…TCCCLLCKCT (1372 aa)) is nonhelical region. 7 VWFA domains span residues 26–205 (DVVF…IKDV), 228–406 (DVVF…LKKL), 435–605 (DIYL…RNQV), 621–790 (DIMF…EDDL), 808–981 (DVVF…FSDV), 999–1170 (DLVF…KKRI), and 1186–1378 (DVVV…INVA). N-linked (GlcNAc...) asparagine glycans are attached at residues N197, N238, and N346. N760 carries an N-linked (GlcNAc...) asparagine glycan. The tract at residues 1391–1724 (GGDGAMGDPG…GRKGVKGARG (334 aa)) is triple-helical region. The interval 1398–1722 (DPGSAGKKGP…PPGRKGVKGA (325 aa)) is disordered. Positions 1455 to 1470 (EEGEVGEDGLDGLDGE) are enriched in acidic residues. Positions 1497–1507 (AAGDRGAKGLR) are enriched in basic and acidic residues. The Cell attachment site motif lies at 1507-1509 (RGD). Residues 1546-1558 (SRRKMVVHGRRGH) are compositionally biased toward basic residues. A nonhelical region region spans residues 1725 to 2265 (LASFSTCDLI…ATSKLGKRSA (541 aa)). VWFA domains lie at 1756–1936 (ELVF…ERLQ) and 1964–2165 (DTAF…INSI). The interval 2186–2205 (SRDLKPPPRQFRSFVPGPQK) is disordered.

This sequence belongs to the type VI collagen family. In terms of assembly, trimers composed of three different chains: alpha-1(VI), alpha-2(VI), and alpha-3(VI) or alpha-4(VI) or alpha-5(VI) or alpha-6(VI). Post-translationally, prolines at the third position of the tripeptide repeating unit (G-X-Y) are hydroxylated in some or all of the chains. As to expression, in newborn, it is expressed in lung, heart, kidney, muscle, brain, intestine, skin, femur and sternum. In adult, it is expressed in lung, heart, muscle, ovary, brain, liver and sternum.

The protein localises to the secreted. It is found in the extracellular space. The protein resides in the extracellular matrix. Collagen VI acts as a cell-binding protein. This is Collagen alpha-6(VI) chain (Col6a6) from Mus musculus (Mouse).